A 233-amino-acid polypeptide reads, in one-letter code: DNA repair protein RecO (233 aa).

Belongs to the RecO family.

In terms of biological role, involved in DNA repair and RecF pathway recombination. This is DNA repair protein RecO from Psychromonas ingrahamii (strain DSM 17664 / CCUG 51855 / 37).